A 263-amino-acid polypeptide reads, in one-letter code: tRNA1(Val) (adenine(37)-N6)-methyltransferase (263 aa).

The protein belongs to the methyltransferase superfamily. tRNA (adenine-N(6)-)-methyltransferase family.

The protein resides in the cytoplasm. It carries out the reaction adenosine(37) in tRNA1(Val) + S-adenosyl-L-methionine = N(6)-methyladenosine(37) in tRNA1(Val) + S-adenosyl-L-homocysteine + H(+). Specifically methylates the adenine in position 37 of tRNA(1)(Val) (anticodon cmo5UAC). This Salmonella choleraesuis (strain SC-B67) protein is tRNA1(Val) (adenine(37)-N6)-methyltransferase.